A 418-amino-acid polypeptide reads, in one-letter code: MNKSVAPLLLAASILYGGAVAQQTVWGQCGGIGWSGPTNCAPGSACSTLNPYYAQCIPGATTITTSTRPPSGPTTTTRATSTSSSTPPTSSGVRFAGVNIAGFDFGCTTDGTCVTSKVYPPLKNFTGSNNYPDGIGQMQHFVNEDGMTIFRLPVGWQYLVNNNLGGNLDSTSISKYDQLVQGCLSLGAYCIVDIHNYARWNGGIIGQGGPTNAQFTSLWSQLASKYASQSRVWFGIMNEPHDVNINTWAATVQEVVTAIRNAGATSQFISLPGNDWQSAGAFISDGSAAALSQVTNPDGSTTNLIFDVHKYLDSDNSGTHAECTTNNIDGAFSPLATWLRQNNRQAILTETGGGNVQSCIQDMCQQIQYLNQNSDVYLGYVGWGAGSFDSTYVLTETPTSSGNSWTDTSLVSSCLARK.

Positions 1–21 are cleaved as a signal peptide; that stretch reads MNKSVAPLLLAASILYGGAVA. Glutamine 22 bears the Pyrrolidone carboxylic acid mark. The 36-residue stretch at 22–57 folds into the CBM1 domain; sequence QQTVWGQCGGIGWSGPTNCAPGSACSTLNPYYAQCI. The interval 58–91 is linker; that stretch reads PGATTITTSTRPPSGPTTTTRATSTSSSTPPTSS. Positions 63–91 are disordered; sequence ITTSTRPPSGPTTTTRATSTSSSTPPTSS. The catalytic stretch occupies residues 92–418; it reads GVRFAGVNIA…SLVSSCLARK (327 aa). Cysteine 107 and cysteine 113 are disulfide-bonded. Asparagine 124 is a glycosylation site (N-linked (GlcNAc) asparagine). Cysteine 183 and cysteine 190 are joined by a disulfide. Glutamate 239 serves as the catalytic Proton donor/acceptor. 2 cysteine pairs are disulfide-bonded: cysteine 323–cysteine 359 and cysteine 364–cysteine 414. The active-site Nucleophile is glutamate 350.

This sequence belongs to the glycosyl hydrolase 5 (cellulase A) family.

Its subcellular location is the secreted. The catalysed reaction is Endohydrolysis of (1-&gt;4)-beta-D-glucosidic linkages in cellulose, lichenin and cereal beta-D-glucans.. In terms of biological role, endoglucanase (EG) that cleaves the internal beta-1,4-glucosidic bonds in cellulose. The degradation of cellulose involves an interplay between different cellulolytic enzymes. Hydrolysis starts with EGs, which cut internal glycosidic linkages to reduce the polymerization degree of the substrate and creates new chain ends for exocellobiohydrolases (CBHs). The CBH release the disaccharide cellobiose from the non-reducing end of the cellulose polymer chain. Finally, beta-1,4-glucosidases hydrolyze the cellobiose and other short cello-oligosaccharides into glucose units. This is Endoglucanase EG-II (egl2) from Hypocrea jecorina (Trichoderma reesei).